Reading from the N-terminus, the 156-residue chain is Small ribosomal subunit protein uS7 (156 aa).

Belongs to the universal ribosomal protein uS7 family. In terms of assembly, part of the 30S ribosomal subunit. Contacts proteins S9 and S11.

Its function is as follows. One of the primary rRNA binding proteins, it binds directly to 16S rRNA where it nucleates assembly of the head domain of the 30S subunit. Is located at the subunit interface close to the decoding center, probably blocks exit of the E-site tRNA. This is Small ribosomal subunit protein uS7 from Teredinibacter turnerae (strain ATCC 39867 / T7901).